The chain runs to 118 residues: MSNIIKQLEQEQMKQDVPAFRPGDSVEVKVWVVEGSKKRLQAFERVVIAIRNRGLHSAFTVRKISNGEGVERVFQTHSPVIDSITVKRRGAVRKAKLYYLRERTGKAARIKERLNRVG.

The protein belongs to the bacterial ribosomal protein bL19 family.

This protein is located at the 30S-50S ribosomal subunit interface and may play a role in the structure and function of the aminoacyl-tRNA binding site. The protein is Large ribosomal subunit protein bL19 (rplS) of Serratia marcescens.